Here is a 472-residue protein sequence, read N- to C-terminus: Probable dipeptidase A (472 aa).

Cys10 is an active-site residue.

This sequence belongs to the peptidase C69 family.

It catalyses the reaction an L-aminoacyl-L-amino acid + H2O = 2 an L-alpha-amino acid. This is Probable dipeptidase A (pepDA) from Streptococcus pyogenes serotype M1.